A 331-amino-acid chain; its full sequence is NADH-quinone oxidoreductase subunit H (331 aa).

Transmembrane regions (helical) follow at residues 5 to 25 (LFFVITTIVKAVVILAVMASL), 45 to 65 (GPDMVGPAGVLQIVADMIKLF), 78 to 98 (FIFLIAPLISAIAAFAALAPV), 122 to 142 (VLYIAGVAAVCVFSPLAAGLA), 156 to 176 (VVALLSFEVVAGMALLSVVMV), 192 to 212 (IFNWLIFKQPLAFVLFVMASF), 245 to 265 (FFIGEYTNMIAASIIITLLFL), 271 to 291 (FLFIPGALMIILKSSLVFFFF), and 311 to 331 (WKILLPLGILNVVITGFALLI).

Belongs to the complex I subunit 1 family. In terms of assembly, NDH-1 is composed of 14 different subunits. Subunits NuoA, H, J, K, L, M, N constitute the membrane sector of the complex.

It localises to the cell inner membrane. It carries out the reaction a quinone + NADH + 5 H(+)(in) = a quinol + NAD(+) + 4 H(+)(out). Its function is as follows. NDH-1 shuttles electrons from NADH, via FMN and iron-sulfur (Fe-S) centers, to quinones in the respiratory chain. The immediate electron acceptor for the enzyme in this species is believed to be ubiquinone. Couples the redox reaction to proton translocation (for every two electrons transferred, four hydrogen ions are translocated across the cytoplasmic membrane), and thus conserves the redox energy in a proton gradient. This subunit may bind ubiquinone. The protein is NADH-quinone oxidoreductase subunit H of Campylobacter concisus (strain 13826).